The sequence spans 362 residues: Protein RecA (362 aa).

G77–T84 contributes to the ATP binding site.

Belongs to the RecA family.

The protein resides in the cytoplasm. Functionally, can catalyze the hydrolysis of ATP in the presence of single-stranded DNA, the ATP-dependent uptake of single-stranded DNA by duplex DNA, and the ATP-dependent hybridization of homologous single-stranded DNAs. It interacts with LexA causing its activation and leading to its autocatalytic cleavage. The polypeptide is Protein RecA (Rhizobium leguminosarum bv. trifolii (strain WSM2304)).